Reading from the N-terminus, the 444-residue chain is Probable galactarate/D-glucarate transporter GarP (444 aa).

Residues M1–K11 lie on the Cytoplasmic side of the membrane. Residues G12 to A32 traverse the membrane as a helical segment. Topologically, residues D33–G56 are periplasmic. The helical transmembrane segment at Y57–L77 threads the bilayer. At D78 to S89 the chain is on the cytoplasmic side. 2 helical membrane-spanning segments follow: residues L90 to W110 and A111 to P131. The Cytoplasmic segment spans residues A132–Q157. Helical transmembrane passes span Y158 to E178 and H179 to I199. Over H200–M252 the chain is Cytoplasmic. Residues L253–F273 traverse the membrane as a helical segment. Residues P274–V288 lie on the Periplasmic side of the membrane. Residues G289–F309 traverse the membrane as a helical segment. Over S310 to S319 the chain is Cytoplasmic. The helical transmembrane segment at L320–L340 threads the bilayer. The Periplasmic segment spans residues C341–V350. A helical transmembrane segment spans residues V351–I371. The Cytoplasmic portion of the chain corresponds to S372–G385. A helical membrane pass occupies residues V386–V406. The Periplasmic portion of the chain corresponds to S407 to N413. Residues A414 to V434 traverse the membrane as a helical segment. Residues G435 to K444 are Cytoplasmic-facing.

It belongs to the major facilitator superfamily. Phthalate permease family.

The protein resides in the cell inner membrane. It carries out the reaction galactarate(in) + H(+)(in) = galactarate(out) + H(+)(out). The enzyme catalyses D-glucarate(in) + H(+)(in) = D-glucarate(out) + H(+)(out). The catalysed reaction is (R)-glycerate(in) + H(+)(in) = (R)-glycerate(out) + H(+)(out). Probably involved in the uptake of galactarate and/or D-glucarate. May also transport D-glycerate. The chain is Probable galactarate/D-glucarate transporter GarP from Escherichia coli (strain K12).